Consider the following 461-residue polypeptide: Putative ankyrin repeat protein FPV218 (461 aa).

ANK repeat units follow at residues 1–28, 31–61, 65–94, 96–116, 120–149, 153–182, 186–213, 217–248, 250–277, 281–312, 358–385, and 431–460; these read MLSL…HPDS, KGFY…NPNN, ETVS…DTSL, PLYV…DVNV, ESRS…NVNV, KGLS…RVNI, LGRL…PIDI, NGST…ALDN, CNSP…DITI, CGNT…LMRE, NGPT…NVQY, and LPYE…LKNK.

This Fowlpox virus (strain NVSL) (FPV) protein is Putative ankyrin repeat protein FPV218.